Reading from the N-terminus, the 763-residue chain is Fibroblast growth factor receptor (763 aa).

The signal sequence occupies residues 1-27 (MKEFEVKVASTAFVLVLFSLTINQILA). The Extracellular portion of the chain corresponds to 28–291 (SETSTKFRSP…ITKGIPNETN (264 aa)). Residues 34 to 74 (FRSPVPAPTVPDWNHLPNEGNEENVVSAPKQDGASGGQKPY) are disordered. Ig-like C2-type domains are found at residues 73 to 164 (PYWT…YQLD) and 173 to 270 (PILA…AWLS). An intrachain disulfide couples cysteine 98 to cysteine 148. 6 N-linked (GlcNAc...) asparagine glycosylation sites follow: asparagine 158, asparagine 182, asparagine 220, asparagine 230, asparagine 243, and asparagine 288. Cysteine 195 and cysteine 254 are disulfide-bonded. The helical transmembrane segment at 292–312 (IIIYVMCGVLVILFGLAVVLV) threads the bilayer. Residues 313-763 (LYYHCYNGKD…NEHARLRSEA (451 aa)) are Cytoplasmic-facing. The region spanning 382–672 (ITLVERLDEG…TLVEDLDRML (291 aa)) is the Protein kinase domain. ATP contacts are provided by residues 388-396 (LDEGFFGQV) and lysine 417. Aspartate 537 acts as the Proton acceptor in catalysis. Residue tyrosine 568 is modified to Phosphotyrosine; by autocatalysis. A compositionally biased stretch (acidic residues) spans 691–711 (YSESSEDESESQNSDEEDDDS). The interval 691 to 742 (YSESSEDESESQNSDEEDDDSVFERMRQIDSLSNGNIPFNEEDSSNSDPYVA) is disordered.

Belongs to the protein kinase superfamily. Tyr protein kinase family. Fibroblast growth factor receptor subfamily.

It localises to the membrane. The catalysed reaction is L-tyrosyl-[protein] + ATP = O-phospho-L-tyrosyl-[protein] + ADP + H(+). Functionally, receptor for basic fibroblast growth factor. In Halocynthia roretzi (Sea squirt), this protein is Fibroblast growth factor receptor (FGFR).